Consider the following 405-residue polypeptide: Envelope glycoprotein M (405 aa).

Topologically, residues methionine 1–threonine 17 are intravirion. A helical membrane pass occupies residues leucine 18–proline 38. The Virion surface portion of the chain corresponds to asparagine 39–glutamate 76. The helical transmembrane segment at methionine 77 to cysteine 97 threads the bilayer. Residues glycine 98–alanine 121 lie on the Intravirion side of the membrane. A helical membrane pass occupies residues valine 122 to isoleucine 142. The Virion surface portion of the chain corresponds to glutamine 143–histidine 149. A helical transmembrane segment spans residues valine 150–alanine 170. Residues cysteine 171–threonine 192 lie on the Intravirion side of the membrane. A helical transmembrane segment spans residues phenylalanine 193–leucine 215. The Virion surface segment spans residues glutamate 216 to asparagine 245. The chain crosses the membrane as a helical span at residues leucine 246 to methionine 266. A topological domain (intravirion) is located at residue arginine 267. Residues histidine 268–valine 288 traverse the membrane as a helical segment. Residues arginine 289 to leucine 299 lie on the Virion surface side of the membrane. Residues histidine 300 to isoleucine 320 form a helical membrane-spanning segment. Topologically, residues arginine 321–proline 405 are intravirion. The disordered stretch occupies residues leucine 346 to proline 405. Residues glutamine 386–threonine 397 are compositionally biased toward polar residues.

It belongs to the herpesviridae glycoprotein M family. As to quaternary structure, interacts (via N-terminus) with gN (via N-terminus). The gM-gN heterodimer forms the gCII complex.

The protein resides in the virion membrane. The protein localises to the host Golgi apparatus. Its subcellular location is the host trans-Golgi network. It localises to the host endosome membrane. It is found in the host nucleus inner membrane. Its function is as follows. Envelope glycoprotein important for virion assembly and egress. Plays a role in the correct incorporation of gH-gL into virion membrane. Directs the glycoprotein N (gN) to the host trans-Golgi network. The chain is Envelope glycoprotein M from Epstein-Barr virus (strain GD1) (HHV-4).